Consider the following 340-residue polypeptide: Protein-arginine kinase (340 aa).

Residues 14–241 (IVLSSRIRLA…YQIINQEKLA (228 aa)) enclose the Phosphagen kinase C-terminal domain. Residues 17–21 (SSRIR), Arg-112, 163–167 (RASVM), and 194–199 (RGIYGE) contribute to the ATP site.

The protein belongs to the ATP:guanido phosphotransferase family.

The catalysed reaction is L-arginyl-[protein] + ATP = N(omega)-phospho-L-arginyl-[protein] + ADP + H(+). Catalyzes the specific phosphorylation of arginine residues in proteins. The polypeptide is Protein-arginine kinase (Clostridium tetani (strain Massachusetts / E88)).